The sequence spans 70 residues: ATP synthase subunit c (70 aa).

Transmembrane regions (helical) follow at residues 3-23 (ALAA…IGIA) and 44-64 (LFFI…VIAI).

It belongs to the ATPase C chain family. In terms of assembly, F-type ATPases have 2 components, F(1) - the catalytic core - and F(0) - the membrane proton channel. F(1) has five subunits: alpha(3), beta(3), gamma(1), delta(1), epsilon(1). F(0) has three main subunits: a(1), b(2) and c(10-14). The alpha and beta chains form an alternating ring which encloses part of the gamma chain. F(1) is attached to F(0) by a central stalk formed by the gamma and epsilon chains, while a peripheral stalk is formed by the delta and b chains.

It localises to the cell membrane. Functionally, f(1)F(0) ATP synthase produces ATP from ADP in the presence of a proton or sodium gradient. F-type ATPases consist of two structural domains, F(1) containing the extramembraneous catalytic core and F(0) containing the membrane proton channel, linked together by a central stalk and a peripheral stalk. During catalysis, ATP synthesis in the catalytic domain of F(1) is coupled via a rotary mechanism of the central stalk subunits to proton translocation. In terms of biological role, key component of the F(0) channel; it plays a direct role in translocation across the membrane. A homomeric c-ring of between 10-14 subunits forms the central stalk rotor element with the F(1) delta and epsilon subunits. In Caldicellulosiruptor saccharolyticus (strain ATCC 43494 / DSM 8903 / Tp8T 6331), this protein is ATP synthase subunit c.